The primary structure comprises 746 residues: Polyribonucleotide nucleotidyltransferase (746 aa).

Asp-519 and Asp-525 together coordinate Mg(2+). The region spanning Pro-585 to Ile-644 is the KH domain. The S1 motif domain occupies Gly-656 to Val-728.

The protein belongs to the polyribonucleotide nucleotidyltransferase family. Mg(2+) is required as a cofactor.

Its subcellular location is the cytoplasm. The catalysed reaction is RNA(n+1) + phosphate = RNA(n) + a ribonucleoside 5'-diphosphate. In terms of biological role, involved in mRNA degradation. Catalyzes the phosphorolysis of single-stranded polyribonucleotides processively in the 3'- to 5'-direction. The polypeptide is Polyribonucleotide nucleotidyltransferase (Arthrobacter sp. (strain FB24)).